The primary structure comprises 327 residues: GTPase Obg (327 aa).

Residues Met-1–Leu-159 form the Obg domain. The OBG-type G domain maps to Ala-160–Ile-327. ATP contacts are provided by residues Gly-166 to Ser-173, Phe-191 to Ile-195, Asp-213 to Gly-216, Asn-280 to Glu-283, and Ser-309 to Ser-311. Residues Ser-173 and Thr-193 each contribute to the Mg(2+) site.

Belongs to the TRAFAC class OBG-HflX-like GTPase superfamily. OBG GTPase family. As to quaternary structure, monomer. Requires Mg(2+) as cofactor.

It is found in the cytoplasm. Functionally, an essential GTPase which binds GTP, GDP and possibly (p)ppGpp with moderate affinity, with high nucleotide exchange rates and a fairly low GTP hydrolysis rate. Plays a role in control of the cell cycle, stress response, ribosome biogenesis and in those bacteria that undergo differentiation, in morphogenesis control. The sequence is that of GTPase Obg from Prochlorococcus marinus subsp. pastoris (strain CCMP1986 / NIES-2087 / MED4).